The chain runs to 97 residues: uncharacterized protein (97 aa).

Helical transmembrane passes span 7 to 27 (CIAP…IGLG), 34 to 54 (IPML…LMFS), and 69 to 89 (IVLY…PTIL).

It is found in the cell membrane. This is an uncharacterized protein from Haemophilus influenzae (strain ATCC 51907 / DSM 11121 / KW20 / Rd).